The primary structure comprises 227 residues: Ubiquitin domain-containing protein 1 (227 aa).

Residues 1–14 (MGGCVGRERAETRG) are compositionally biased toward basic and acidic residues. Positions 1–45 (MGGCVGRERAETRGRGSRTQRKRGGRNEPLKKDKPKWKSDYPMTE) are disordered. The span at 15–24 (RGSRTQRKRG) shows a compositional bias: basic residues. Positions 25–39 (GRNEPLKKDKPKWKS) are enriched in basic and acidic residues. The 76-residue stretch at 150–225 (FQLKVRLSTG…IQVIVNQPAP (76 aa)) folds into the Ubiquitin-like domain.

In terms of biological role, may be involved in the regulation of cellular senescence through a positive feedback loop with TP53. The sequence is that of Ubiquitin domain-containing protein 1 (ubtd1) from Danio rerio (Zebrafish).